We begin with the raw amino-acid sequence, 94 residues long: Large ribosomal subunit protein bL25 (94 aa).

Belongs to the bacterial ribosomal protein bL25 family. As to quaternary structure, part of the 50S ribosomal subunit; part of the 5S rRNA/L5/L18/L25 subcomplex. Contacts the 5S rRNA. Binds to the 5S rRNA independently of L5 and L18.

This is one of the proteins that binds to the 5S RNA in the ribosome where it forms part of the central protuberance. The chain is Large ribosomal subunit protein bL25 from Klebsiella pneumoniae (strain 342).